Here is a 240-residue protein sequence, read N- to C-terminus: Purine nucleoside phosphorylase RC0672 (240 aa).

Positions 60, 96, and 113 each coordinate Zn(2+).

The protein belongs to the purine nucleoside phosphorylase YfiH/LACC1 family. In terms of assembly, homodimer. Requires Cu(2+) as cofactor. The cofactor is Zn(2+).

It catalyses the reaction adenosine + phosphate = alpha-D-ribose 1-phosphate + adenine. The enzyme catalyses S-methyl-5'-thioadenosine + phosphate = 5-(methylsulfanyl)-alpha-D-ribose 1-phosphate + adenine. It carries out the reaction inosine + phosphate = alpha-D-ribose 1-phosphate + hypoxanthine. The catalysed reaction is adenosine + H2O + H(+) = inosine + NH4(+). In terms of biological role, purine nucleoside enzyme that catalyzes the phosphorolysis of adenosine and inosine nucleosides, yielding D-ribose 1-phosphate and the respective free bases, adenine and hypoxanthine. Also catalyzes the phosphorolysis of S-methyl-5'-thioadenosine into adenine and S-methyl-5-thio-alpha-D-ribose 1-phosphate. Also has adenosine deaminase activity. The sequence is that of Purine nucleoside phosphorylase RC0672 from Rickettsia conorii (strain ATCC VR-613 / Malish 7).